The sequence spans 194 residues: tRNA (guanine-N(1)-)-methyltransferase (194 aa).

S-adenosyl-L-methionine is bound by residues glycine 78 and isoleucine 97–leucine 102.

Belongs to the RNA methyltransferase TrmD family. In terms of assembly, homodimer.

It is found in the cytoplasm. It catalyses the reaction guanosine(37) in tRNA + S-adenosyl-L-methionine = N(1)-methylguanosine(37) in tRNA + S-adenosyl-L-homocysteine + H(+). Specifically methylates guanosine-37 in various tRNAs. The chain is tRNA (guanine-N(1)-)-methyltransferase from Mycoplasma mobile (strain ATCC 43663 / 163K / NCTC 11711) (Mesomycoplasma mobile).